We begin with the raw amino-acid sequence, 872 residues long: Lysosomal cholesterol signaling protein (872 aa).

Residues 1-40 lie on the Lumenal side of the membrane; that stretch reads MNSFSNLPAENLTIAVNMTKTLPTAVMHGFNSTNDPPSMS. A PIN-like transporter region spans residues 3–372; that stretch reads SFSNLPAENL…SAWLLTFPTM (370 aa). 3 N-linked (GlcNAc...) asparagine glycosylation sites follow: asparagine 11, asparagine 17, and asparagine 31. Residues 41 to 61 form a helical membrane-spanning segment; the sequence is ITRLFPALLECFGIVLCGYIA. Phenylalanine 45 and tyrosine 59 together coordinate cholesterol. Residues 62–81 are Cytoplasmic-facing; sequence GRANVITSTQAKGLGNFVSR. A helical transmembrane segment spans residues 82–102; sequence FALPALLFKNMVVLNFSNVDW. Over 103-106 the chain is Lumenal; that stretch reads SFLY. Residues 107–127 form a helical membrane-spanning segment; that stretch reads SILIAKASVFFIVCVLTLLVA. Topologically, residues 128-135 are cytoplasmic; sequence SPDSRFSK. Residues 136–156 form a discontinuously helical membrane-spanning segment; that stretch reads AGLFPIFATQSNDFALGYPIV. Over 157-169 the chain is Lumenal; it reads EALYQTTYPEYLQ. The helical transmembrane segment at 170–190 threads the bilayer; that stretch reads YIYLVAPISLMMLNPIGFIFC. Residues 191 to 215 lie on the Cytoplasmic side of the membrane; sequence EIQKWKDTQNASQNKIKIVGLGLLR. The chain crosses the membrane as a discontinuously helical span at residues 216–236; sequence VLQNPIVFMVFIGIAFNFILD. Over 237–245 the chain is Lumenal; the sequence is RKVPVYVEN. A discontinuously helical transmembrane segment spans residues 246–266; it reads FLDGLGNSFSGSALFYLGLTM. Residues 267-275 are Cytoplasmic-facing; sequence VGKIKRLKK. Residues glycine 268, lysine 269, and isoleucine 270 each contribute to the cholesterol site. The chain crosses the membrane as a helical span at residues 276 to 296; sequence SAFVVLILLITAKLLVLPLLC. Topologically, residues 297-317 are lumenal; it reads REMVELLDKGDSVVNHTSLSN. Asparagine 311 carries an N-linked (GlcNAc...) asparagine glycan. The chain crosses the membrane as a discontinuously helical span at residues 318 to 338; sequence YAFLYGVFPVAPGVAIFATQF. Topologically, residues 339 to 348 are cytoplasmic; it reads NMEVEIITSG. A helical transmembrane segment spans residues 349–369; that stretch reads MVISTFVSAPIMYVSAWLLTF. Topologically, residues 370 to 383 are lumenal; sequence PTMDPKPLAYAIQN. Positions 382-719 are GPCR; that stretch reads QNVSFDISIV…FGIFGLDKHL (338 aa). A glycan (N-linked (GlcNAc...) asparagine) is linked at asparagine 383. The chain crosses the membrane as a helical span at residues 384-404; the sequence is VSFDISIVSLISLIWSQAILL. The Cytoplasmic portion of the chain corresponds to 405–416; it reads LSKKYKQLPHML. A helical membrane pass occupies residues 417–437; sequence TTNLLIAQSIVCAGMMIWNFV. The Lumenal segment spans residues 438–440; sequence KEK. Residues 441 to 461 form a helical membrane-spanning segment; it reads NFVGQILVFVLLYSSLYSTYL. Topologically, residues 462–482 are cytoplasmic; that stretch reads WTGLLAISLFLLKKRERVQIP. Residues 483-503 traverse the membrane as a helical segment; the sequence is VGIIIISGWGIPALLVGVLLI. The Lumenal segment spans residues 504 to 522; sequence TGKHSGDSIDSAFFYGKEQ. Residues 523-543 traverse the membrane as a helical segment; that stretch reads MITTAVTLFCSILIAGISLMC. Topologically, residues 544 to 662 are cytoplasmic; sequence MNRTAQAGSY…GDQQLTRHVL (119 aa). Arginine 659 is a cholesterol binding site. A helical membrane pass occupies residues 663–683; that stretch reads LCLLLIIGLFANLSSCLWWLF. The Lumenal segment spans residues 684–693; the sequence is NQEPGRLYVE. The helical transmembrane segment at 694–714 threads the bilayer; that stretch reads LQFFCAVFNFGQGFISFGIFG. At 715 to 872 the chain is on the cytoplasmic side; it reads LDKHLIILPF…SSPPSHSPKT (158 aa). Residues 759–837 enclose the DEP domain; sequence YHRDLCIRNI…DEYLFYRFLQ (79 aa).

Homodimer; via the transporter region and DEP domain. Interacts with the GATOR1 complex; preventing interaction between GATOR1 and KICSTOR; interaction is disrupted upon cholesterol starvation.

The protein resides in the lysosome membrane. Cholesterol-binding protein that acts as a regulator of mTORC1 signaling pathway. Acts as a sensor of cholesterol to signal cholesterol sufficiency to mTORC1: in presence of cholesterol, binds cholesterol, leading to disruption of the interaction between the GATOR1 and KICSTOR complexes and promotion of mTORC1 signaling. Upon cholesterol starvation, GPR155/LYCHOS is unable to perturb the association between GATOR1 and KICSTOR, leading to mTORC1 signaling inhibition. Binds indole-3-acetic acid and may play a role in tryptophan metabolism. This chain is Lysosomal cholesterol signaling protein (GPR155), found in Pongo abelii (Sumatran orangutan).